Reading from the N-terminus, the 281-residue chain is Acetylglutamate kinase (281 aa).

Substrate contacts are provided by residues 64 to 65 (GG), arginine 86, and asparagine 179.

The protein belongs to the acetylglutamate kinase family. ArgB subfamily.

Its subcellular location is the cytoplasm. The enzyme catalyses N-acetyl-L-glutamate + ATP = N-acetyl-L-glutamyl 5-phosphate + ADP. The protein operates within amino-acid biosynthesis; L-arginine biosynthesis; N(2)-acetyl-L-ornithine from L-glutamate: step 2/4. Catalyzes the ATP-dependent phosphorylation of N-acetyl-L-glutamate. This is Acetylglutamate kinase from Campylobacter curvus (strain 525.92).